Here is a 254-residue protein sequence, read N- to C-terminus: 14-3-3-like protein GF14 epsilon (254 aa).

A phosphoserine mark is found at serine 65 and serine 188.

Belongs to the 14-3-3 family. Interacts with DREB1A and DREB1B in the nucleus. Interacts with CINV1.

It localises to the nucleus. The protein localises to the cytoplasm. In terms of biological role, is associated with a DNA binding complex that binds to the G box, a well-characterized cis-acting DNA regulatory element found in plant genes. The chain is 14-3-3-like protein GF14 epsilon (GRF10) from Arabidopsis thaliana (Mouse-ear cress).